The primary structure comprises 150 residues: MRVLVQRVKEASVKSGDYYGSVQKGLLLLVGVHELSTESDADALADKIVKSRIFEDDAGKMNLSVQDIAGEILSISQFTLYADVKKGNRPSFTKAMQPQKAEQIYHYFNTQLKNKGLKVVQGCFGEMMDIALINEGPVTIMYESKDGKLV.

The Gly-cisPro motif, important for rejection of L-amino acids signature appears at glycine 136–proline 137.

The protein belongs to the DTD family. In terms of assembly, homodimer.

The protein localises to the cytoplasm. It carries out the reaction glycyl-tRNA(Ala) + H2O = tRNA(Ala) + glycine + H(+). The catalysed reaction is a D-aminoacyl-tRNA + H2O = a tRNA + a D-alpha-amino acid + H(+). An aminoacyl-tRNA editing enzyme that deacylates mischarged D-aminoacyl-tRNAs. Also deacylates mischarged glycyl-tRNA(Ala), protecting cells against glycine mischarging by AlaRS. Acts via tRNA-based rather than protein-based catalysis; rejects L-amino acids rather than detecting D-amino acids in the active site. By recycling D-aminoacyl-tRNA to D-amino acids and free tRNA molecules, this enzyme counteracts the toxicity associated with the formation of D-aminoacyl-tRNA entities in vivo and helps enforce protein L-homochirality. In Macrococcus caseolyticus (strain JCSC5402) (Macrococcoides caseolyticum), this protein is D-aminoacyl-tRNA deacylase.